A 568-amino-acid polypeptide reads, in one-letter code: Periplasmic trehalase (568 aa).

The first 39 residues, 1–39, serve as a signal peptide directing secretion; it reads MPYATARSGDVMSSAAPPCCTSLLGLSLSMFVAPGTLTA. Residues R169, 176-177, N213, 222-224, 294-296, and G327 contribute to the substrate site; these read WD, RSQ, and RPE. Residues D329 and E511 each act as proton donor/acceptor in the active site. Substrate is bound at residue E526.

Belongs to the glycosyl hydrolase 37 family.

The protein resides in the periplasm. It catalyses the reaction alpha,alpha-trehalose + H2O = alpha-D-glucose + beta-D-glucose. Provides the cells with the ability to utilize trehalose at high osmolarity by splitting it into glucose molecules that can subsequently be taken up by the phosphotransferase-mediated uptake system. The chain is Periplasmic trehalase from Xanthomonas axonopodis pv. citri (strain 306).